The chain runs to 307 residues: 2-dehydropantoate 2-reductase (307 aa).

NADP(+)-binding positions include 7–12 (GSGAMG), N102, and A128. N102 serves as a coordination point for substrate. Residue K184 is the Proton donor of the active site. Substrate contacts are provided by N188, N192, and S255. An NADP(+)-binding site is contributed by E268.

Belongs to the ketopantoate reductase family.

It localises to the cytoplasm. It catalyses the reaction (R)-pantoate + NADP(+) = 2-dehydropantoate + NADPH + H(+). It functions in the pathway cofactor biosynthesis; (R)-pantothenate biosynthesis; (R)-pantoate from 3-methyl-2-oxobutanoate: step 2/2. In terms of biological role, catalyzes the NADPH-dependent reduction of ketopantoate into pantoic acid. This Streptococcus pyogenes serotype M1 protein is 2-dehydropantoate 2-reductase (apbA).